An 89-amino-acid polypeptide reads, in one-letter code: Phosphocarrier protein HPr (89 aa).

In terms of domain architecture, HPr spans 2 to 89 (AKFSAIITDK…TMIDTALIQG (88 aa)). The active-site Pros-phosphohistidine intermediate is the H15. The residue at position 46 (S46) is a Phosphoserine; by HPrK/P.

Belongs to the HPr family.

It localises to the cytoplasm. Phosphorylation on Ser-46 inhibits the phosphoryl transfer from enzyme I to HPr. Functionally, general (non sugar-specific) component of the phosphoenolpyruvate-dependent sugar phosphotransferase system (sugar PTS). This major carbohydrate active-transport system catalyzes the phosphorylation of incoming sugar substrates concomitantly with their translocation across the cell membrane. The phosphoryl group from phosphoenolpyruvate (PEP) is transferred to the phosphoryl carrier protein HPr by enzyme I. Phospho-HPr then transfers it to the PTS EIIA domain. Its function is as follows. P-Ser-HPr interacts with the catabolite control protein A (CcpA), forming a complex that binds to DNA at the catabolite response elements cre, operator sites preceding a large number of catabolite-regulated genes. Thus, P-Ser-HPr is a corepressor in carbon catabolite repression (CCR), a mechanism that allows bacteria to coordinate and optimize the utilization of available carbon sources. P-Ser-HPr also plays a role in inducer exclusion, in which it probably interacts with several non-PTS permeases and inhibits their transport activity. The polypeptide is Phosphocarrier protein HPr (ptsH) (Mycoplasma capricolum subsp. capricolum (strain California kid / ATCC 27343 / NCTC 10154)).